The chain runs to 161 residues: Globin CTT-VIIB-3 (161 aa).

An N-terminal signal peptide occupies residues 1–16 (MKFFAVLALCIVGAIA). Positions 18–161 (PLTADEASLV…NTYAIVVPRL (144 aa)) constitute a Globin domain. Residues histidine 76 and histidine 111 each coordinate heme b.

It belongs to the globin family. In terms of assembly, homodimer.

The protein is Globin CTT-VIIB-3 (CTT-7B3) of Chironomus thummi thummi (Midge).